Reading from the N-terminus, the 113-residue chain is Prefoldin subunit beta (113 aa).

It belongs to the prefoldin subunit beta family. In terms of assembly, heterohexamer of two alpha and four beta subunits.

It localises to the cytoplasm. In terms of biological role, molecular chaperone capable of stabilizing a range of proteins. Seems to fulfill an ATP-independent, HSP70-like function in archaeal de novo protein folding. This is Prefoldin subunit beta from Methanococcus maripaludis (strain DSM 14266 / JCM 13030 / NBRC 101832 / S2 / LL).